A 504-amino-acid chain; its full sequence is Maturase K (504 aa).

It belongs to the intron maturase 2 family. MatK subfamily.

Its subcellular location is the plastid. It is found in the chloroplast. In terms of biological role, usually encoded in the trnK tRNA gene intron. Probably assists in splicing its own and other chloroplast group II introns. The chain is Maturase K from Gossypium barbadense (Sea Island cotton).